Reading from the N-terminus, the 67-residue chain is Kappa-scoloptoxin(04)-Ssd1b (67 aa).

A signal peptide spans 1-24 (MKKTCVVSVFLVLLLLKFHDLSMG). Residues 25–36 (EEISPLKKVARR) constitute a propeptide that is removed on maturation. 2 cysteine pairs are disulfide-bonded: Cys-44-Cys-55 and Cys-49-Cys-62.

As to expression, expressed by the venom gland.

It localises to the secreted. This Scolopendra dehaani (Thai centipede) protein is Kappa-scoloptoxin(04)-Ssd1b.